A 399-amino-acid polypeptide reads, in one-letter code: Formate-dependent phosphoribosylglycinamide formyltransferase (399 aa).

Residues 8–9 and glutamate 68 each bind N(1)-(5-phospho-beta-D-ribosyl)glycinamide; that span reads EL. Residues arginine 100, lysine 141, 146–151, 185–188, and glutamate 193 contribute to the ATP site; these read SSGHGQ and EALA. In terms of domain architecture, ATP-grasp spans 105 to 308; that stretch reads VLAHEELGLP…EFALHARAIL (204 aa). The Mg(2+) site is built by glutamate 266 and glutamate 279. N(1)-(5-phospho-beta-D-ribosyl)glycinamide is bound by residues aspartate 286, lysine 361, and 368-369; that span reads RR.

This sequence belongs to the PurK/PurT family. As to quaternary structure, homodimer.

The catalysed reaction is N(1)-(5-phospho-beta-D-ribosyl)glycinamide + formate + ATP = N(2)-formyl-N(1)-(5-phospho-beta-D-ribosyl)glycinamide + ADP + phosphate + H(+). It participates in purine metabolism; IMP biosynthesis via de novo pathway; N(2)-formyl-N(1)-(5-phospho-D-ribosyl)glycinamide from N(1)-(5-phospho-D-ribosyl)glycinamide (formate route): step 1/1. Functionally, involved in the de novo purine biosynthesis. Catalyzes the transfer of formate to 5-phospho-ribosyl-glycinamide (GAR), producing 5-phospho-ribosyl-N-formylglycinamide (FGAR). Formate is provided by PurU via hydrolysis of 10-formyl-tetrahydrofolate. This is Formate-dependent phosphoribosylglycinamide formyltransferase from Bifidobacterium longum (strain NCC 2705).